Here is a 325-residue protein sequence, read N- to C-terminus: Phenylalanine--tRNA ligase alpha subunit (325 aa).

Residue Glu251 participates in Mg(2+) binding.

It belongs to the class-II aminoacyl-tRNA synthetase family. Phe-tRNA synthetase alpha subunit type 1 subfamily. As to quaternary structure, tetramer of two alpha and two beta subunits. The cofactor is Mg(2+).

Its subcellular location is the cytoplasm. It catalyses the reaction tRNA(Phe) + L-phenylalanine + ATP = L-phenylalanyl-tRNA(Phe) + AMP + diphosphate + H(+). In Thermotoga neapolitana (strain ATCC 49049 / DSM 4359 / NBRC 107923 / NS-E), this protein is Phenylalanine--tRNA ligase alpha subunit.